A 931-amino-acid polypeptide reads, in one-letter code: Neuropilin-2 (931 aa).

The first 20 residues, 1–20 (MDMFPLTWVFLALYFSGHEV), serve as a signal peptide directing secretion. At 21-864 (RSQQDPPCGG…EKSWLYTLDP (844 aa)) the chain is on the extracellular side. Cystine bridges form between Cys28–Cys55, Cys83–Cys105, and Cys149–Cys175. CUB domains lie at 28–142 (CGGR…YEIF) and 149–267 (CSKN…YYLI). 2 N-linked (GlcNAc...) asparagine glycosylation sites follow: Asn152 and Asn157. The Ca(2+) site is built by Glu197, Asp211, and Asp252. A disulfide bond links Cys208 and Cys230. 2 disulfides stabilise this stretch: Cys277-Cys427 and Cys434-Cys592. 2 consecutive F5/8 type C domains span residues 277 to 427 (CNVP…LFGC) and 434 to 592 (CSNM…VLGC). Residues 298–310 (TFSDGRWTPQQSR) show a composition bias toward polar residues. The segment at 298–317 (TFSDGRWTPQQSRLHGDDNG) is disordered. Residues 601–621 (VETLGPTVKSEETTTPYPMDE) form a disordered region. Residue Asn629 is glycosylated (N-linked (GlcNAc...) asparagine). The MAM domain maps to 642–802 (SGFNCNFDFP…TDVPLENCME (161 aa)). Residues 819 to 854 (THGGEGYEDEIDDEYEGDWSNSSSSTSGAGDPSSGK) are disordered. Positions 824 to 835 (GYEDEIDDEYEG) are enriched in acidic residues. A compositionally biased stretch (low complexity) spans 836–851 (DWSNSSSSTSGAGDPS). An N-linked (GlcNAc...) asparagine glycan is attached at Asn839. The helical transmembrane segment at 865–889 (ILITIIAMSSLGVLLGATCAGLLLY) threads the bilayer. The Cytoplasmic portion of the chain corresponds to 890–931 (CTCSYSGLSSRSCTTLENYNFELYDGLKHKVKINHQKCCSEA).

The protein belongs to the neuropilin family. Heterodimer with NRP1. Binds PLXNB1. As to expression, expressed in developing CNS, PNS and in some nonneural tissues including limb buds, developing bones, muscles, intestinal epithelium, kidney, lung and submandibular gland.

It localises to the membrane. High affinity receptor for semaphorins 3C, 3F, VEGF-165 and VEGF-145 isoforms of VEGF, and the PLGF-2 isoform of PGF. The polypeptide is Neuropilin-2 (Nrp2) (Mus musculus (Mouse)).